A 348-amino-acid chain; its full sequence is Histidinol-phosphate aminotransferase (348 aa).

Residues 1–31 (MLPTRDCVRQTPAYTPGEQPQTAGFTKLNTN) are disordered. Residues 18–31 (EQPQTAGFTKLNTN) show a composition bias toward polar residues. N6-(pyridoxal phosphate)lysine is present on Lys207.

This sequence belongs to the class-II pyridoxal-phosphate-dependent aminotransferase family. Histidinol-phosphate aminotransferase subfamily. Homodimer. Pyridoxal 5'-phosphate serves as cofactor.

The catalysed reaction is L-histidinol phosphate + 2-oxoglutarate = 3-(imidazol-4-yl)-2-oxopropyl phosphate + L-glutamate. It functions in the pathway amino-acid biosynthesis; L-histidine biosynthesis; L-histidine from 5-phospho-alpha-D-ribose 1-diphosphate: step 7/9. The sequence is that of Histidinol-phosphate aminotransferase from Microcystis aeruginosa (strain NIES-843 / IAM M-2473).